An 89-amino-acid chain; its full sequence is Small ribosomal subunit protein uS15 (89 aa).

This sequence belongs to the universal ribosomal protein uS15 family. Part of the 30S ribosomal subunit. Forms a bridge to the 50S subunit in the 70S ribosome, contacting the 23S rRNA.

Its function is as follows. One of the primary rRNA binding proteins, it binds directly to 16S rRNA where it helps nucleate assembly of the platform of the 30S subunit by binding and bridging several RNA helices of the 16S rRNA. Forms an intersubunit bridge (bridge B4) with the 23S rRNA of the 50S subunit in the ribosome. The protein is Small ribosomal subunit protein uS15 of Buchnera aphidicola subsp. Schizaphis graminum (strain Sg).